The chain runs to 94 residues: UPF0298 protein SZO_03600 (94 aa).

The protein belongs to the UPF0298 family.

The protein resides in the cytoplasm. This Streptococcus equi subsp. zooepidemicus (strain H70) protein is UPF0298 protein SZO_03600.